The chain runs to 202 residues: Imidazoleglycerol-phosphate dehydratase (202 aa).

Belongs to the imidazoleglycerol-phosphate dehydratase family.

It localises to the cytoplasm. The catalysed reaction is D-erythro-1-(imidazol-4-yl)glycerol 3-phosphate = 3-(imidazol-4-yl)-2-oxopropyl phosphate + H2O. The protein operates within amino-acid biosynthesis; L-histidine biosynthesis; L-histidine from 5-phospho-alpha-D-ribose 1-diphosphate: step 6/9. In Brucella anthropi (strain ATCC 49188 / DSM 6882 / CCUG 24695 / JCM 21032 / LMG 3331 / NBRC 15819 / NCTC 12168 / Alc 37) (Ochrobactrum anthropi), this protein is Imidazoleglycerol-phosphate dehydratase.